The chain runs to 746 residues: Hyperosmolality-gated Ca2+ permeable channel 2.1 (746 aa).

Helical transmembrane passes span 3–23 (ISAL…LLSL), 90–110 (MVIF…AFVL), 144–164 (LWVH…LLYF), 357–377 (IATL…VTFI), 405–425 (VITG…VPPL), 445–465 (ACIK…ILSG), 492–512 (AGFF…CEIM), 560–580 (VIAP…YLIY), 601–621 (IFHN…LGFF), and 623–643 (LKLS…TLLF). The segment covering 692-702 (LHSQKSSSKAE) has biased composition (polar residues). The disordered stretch occupies residues 692-723 (LHSQKSSSKAECSNPFKKQELPDPEKLKPEEG). Residues 708–723 (KKQELPDPEKLKPEEG) are compositionally biased toward basic and acidic residues.

It belongs to the CSC1 (TC 1.A.17) family.

The protein resides in the membrane. In terms of biological role, acts as an osmosensitive calcium-permeable cation channel. This is Hyperosmolality-gated Ca2+ permeable channel 2.1 from Arabidopsis thaliana (Mouse-ear cress).